Consider the following 119-residue polypeptide: Large ribosomal subunit protein uL22 (119 aa).

It belongs to the universal ribosomal protein uL22 family. Part of the 50S ribosomal subunit.

Functionally, this protein binds specifically to 23S rRNA; its binding is stimulated by other ribosomal proteins, e.g. L4, L17, and L20. It is important during the early stages of 50S assembly. It makes multiple contacts with different domains of the 23S rRNA in the assembled 50S subunit and ribosome. In terms of biological role, the globular domain of the protein is located near the polypeptide exit tunnel on the outside of the subunit, while an extended beta-hairpin is found that lines the wall of the exit tunnel in the center of the 70S ribosome. The chain is Large ribosomal subunit protein uL22 from Rickettsia akari (strain Hartford).